The chain runs to 802 residues: Fibroblast growth factor receptor 4 (802 aa).

The N-terminal stretch at 1-21 is a signal peptide; it reads MRLLLALLGVLLSVPGPPVLS. Positions 22 to 118 constitute an Ig-like C2-type 1 domain; it reads LEASEEVELE…VLQNLTLITG (97 aa). The Extracellular portion of the chain corresponds to 22 to 369; it reads LEASEEVELE…AAAPEARYTD (348 aa). Cysteine 57 and cysteine 101 form a disulfide bridge. An N-linked (GlcNAc...) asparagine glycan is attached at asparagine 112. The disordered stretch occupies residues 119 to 148; it reads DSLTSSNDDEDPKSHRDPSNRHSYPQQAPY. 2 consecutive Ig-like C2-type domains span residues 152-240 and 249-349; these read PQRM…YLLD and PILQ…AWLT. Cysteine 172 and cysteine 224 form a disulfide bridge. Residues asparagine 258, asparagine 290, asparagine 311, and asparagine 322 are each glycosylated (N-linked (GlcNAc...) asparagine). Cysteines 271 and 333 form a disulfide. Residues 370-390 traverse the membrane as a helical segment; sequence IILYASGSLALAVLLLLAGLY. Position 390 is a phosphotyrosine; in variant R-388 (tyrosine 390). Residues 391-802 are Cytoplasmic-facing; the sequence is RGQALHGRHP…SFPFGSGVQT (412 aa). One can recognise a Protein kinase domain in the interval 467–755; it reads LVLGKPLGEG…VLLAVSEEYL (289 aa). ATP-binding positions include 473–481 and lysine 503; that span reads LGEGCFGQV. Serine 573 is subject to Phosphoserine. Catalysis depends on aspartate 612, which acts as the Proton acceptor. Phosphotyrosine; by autocatalysis is present on residues tyrosine 642, tyrosine 643, and tyrosine 754.

It belongs to the protein kinase superfamily. Tyr protein kinase family. Fibroblast growth factor receptor subfamily. As to quaternary structure, monomer. Homodimer after ligand binding. Interacts with FGF1, FGF2, FGF4, FGF6, FGF8, FGF9, FGF16, FGF17, FGF18, FGF19, FGF21 and FGF23 (in vitro). Binding affinity for FGF family members is enhanced by interactions between FGFs and heparan sulfate proteoglycans. Interacts with KLB; this strongly increases the affinity for FGF19 and FGF23. Affinity for FGF19 is strongly increased by KLB and sulfated glycosaminoglycans. KLB and KL both interact with the core-glycosylated FGFR4 in the endoplasmic reticulum and promote its degradation, so that only FGFR4 with fully mature N-glycans is expressed at the cell surface. Identified in a complex with NCAM1, CDH2, PLCG1, FRS2, SRC, SHC1, GAP43 and CTTN. Interacts with MMP14 and HIP1. Interacts with STAT3. In terms of processing, N-glycosylated. Full maturation of the glycan chains in the Golgi is essential for high affinity interaction with FGF19. Ubiquitinated. Subject to proteasomal degradation when not fully glycosylated. Post-translationally, autophosphorylated. Binding of FGF family members together with heparan sulfate proteoglycan or heparin promotes receptor dimerization and autophosphorylation on tyrosine residues. Autophosphorylation occurs in trans between the two FGFR molecules present in the dimer. As to expression, expressed in gastrointestinal epithelial cells, pancreas, and gastric and pancreatic cancer cell lines.

The protein resides in the cell membrane. It is found in the endosome. Its subcellular location is the endoplasmic reticulum. It localises to the secreted. It catalyses the reaction L-tyrosyl-[protein] + ATP = O-phospho-L-tyrosyl-[protein] + ADP + H(+). With respect to regulation, present in an inactive conformation in the absence of bound ligand. Ligand binding leads to dimerization and activation by autophosphorylation on tyrosine residues. In terms of biological role, tyrosine-protein kinase that acts as a cell-surface receptor for fibroblast growth factors and plays a role in the regulation of cell proliferation, differentiation and migration, and in regulation of lipid metabolism, bile acid biosynthesis, glucose uptake, vitamin D metabolism and phosphate homeostasis. Required for normal down-regulation of the expression of CYP7A1, the rate-limiting enzyme in bile acid synthesis, in response to FGF19. Phosphorylates PLCG1 and FRS2. Ligand binding leads to the activation of several signaling cascades. Activation of PLCG1 leads to the production of the cellular signaling molecules diacylglycerol and inositol 1,4,5-trisphosphate. Phosphorylation of FRS2 triggers recruitment of GRB2, GAB1, PIK3R1 and SOS1, and mediates activation of RAS, MAPK1/ERK2, MAPK3/ERK1 and the MAP kinase signaling pathway, as well as of the AKT1 signaling pathway. Promotes SRC-dependent phosphorylation of the matrix protease MMP14 and its lysosomal degradation. FGFR4 signaling is down-regulated by receptor internalization and degradation; MMP14 promotes internalization and degradation of FGFR4. Mutations that lead to constitutive kinase activation or impair normal FGFR4 inactivation lead to aberrant signaling. The sequence is that of Fibroblast growth factor receptor 4 (FGFR4) from Homo sapiens (Human).